A 623-amino-acid polypeptide reads, in one-letter code: uncharacterized protein (623 aa).

Positions 256-351 (AEEKLLSKNK…EEIHGLKKKN (96 aa)) form a coiled coil. Disordered stretches follow at residues 417 to 485 (NRRN…SPSS) and 497 to 536 (ALSS…ECAT). The span at 422–431 (LESVPFNTLS) shows a compositional bias: polar residues. Residues 452-481 (ELKKPAESYGDETKKPNQHNKDGSIDEKPK) show a composition bias toward basic and acidic residues.

This is an uncharacterized protein from Arabidopsis thaliana (Mouse-ear cress).